The chain runs to 502 residues: Lysine--tRNA ligase (502 aa).

Mg(2+) is bound by residues Glu-411 and Glu-418.

Belongs to the class-II aminoacyl-tRNA synthetase family. As to quaternary structure, homodimer. Mg(2+) is required as a cofactor.

Its subcellular location is the cytoplasm. It catalyses the reaction tRNA(Lys) + L-lysine + ATP = L-lysyl-tRNA(Lys) + AMP + diphosphate. The protein is Lysine--tRNA ligase of Clostridium kluyveri (strain ATCC 8527 / DSM 555 / NBRC 12016 / NCIMB 10680 / K1).